A 296-amino-acid chain; its full sequence is Acetyl-coenzyme A carboxylase carboxyl transferase subunit beta (296 aa).

Positions 25 to 294 constitute a CoA carboxyltransferase N-terminal domain; it reads VWTKCTACEQ…PFVEPELISE (270 aa). 4 residues coordinate Zn(2+): cysteine 29, cysteine 32, cysteine 48, and cysteine 51. The C4-type zinc finger occupies 29–51; it reads CTACEQVLYSEELKRNLYVCPKC.

The protein belongs to the AccD/PCCB family. As to quaternary structure, acetyl-CoA carboxylase is a heterohexamer composed of biotin carboxyl carrier protein (AccB), biotin carboxylase (AccC) and two subunits each of ACCase subunit alpha (AccA) and ACCase subunit beta (AccD). Requires Zn(2+) as cofactor.

Its subcellular location is the cytoplasm. The catalysed reaction is N(6)-carboxybiotinyl-L-lysyl-[protein] + acetyl-CoA = N(6)-biotinyl-L-lysyl-[protein] + malonyl-CoA. It participates in lipid metabolism; malonyl-CoA biosynthesis; malonyl-CoA from acetyl-CoA: step 1/1. In terms of biological role, component of the acetyl coenzyme A carboxylase (ACC) complex. Biotin carboxylase (BC) catalyzes the carboxylation of biotin on its carrier protein (BCCP) and then the CO(2) group is transferred by the transcarboxylase to acetyl-CoA to form malonyl-CoA. This is Acetyl-coenzyme A carboxylase carboxyl transferase subunit beta from Haemophilus influenzae (strain 86-028NP).